Reading from the N-terminus, the 157-residue chain is Vitamin K-dependent protein C (157 aa).

Residues glutamate 1 to valine 157 enclose the Peptidase S1 domain. Asparagine 17 is a glycosylation site (N-linked (GlcNAc...) asparagine). Aspartate 26 serves as the catalytic Charge relay system. N-linked (GlcNAc...) asparagine glycosylation occurs at asparagine 78. Intrachain disulfides connect cysteine 96-cysteine 110 and cysteine 121-cysteine 149. The Charge relay system role is filled by serine 125.

It belongs to the peptidase S1 family. Plasma; synthesized in the liver.

It is found in the secreted. Its subcellular location is the golgi apparatus. The protein localises to the endoplasmic reticulum. It catalyses the reaction Degradation of blood coagulation factors Va and VIIIa.. In terms of biological role, protein C is a vitamin K-dependent serine protease that regulates blood coagulation by inactivating factors Va and VIIIa in the presence of calcium ions and phospholipids. Exerts a protective effect on the endothelial cell barrier function. This Equus caballus (Horse) protein is Vitamin K-dependent protein C (PROC).